A 111-amino-acid polypeptide reads, in one-letter code: uncharacterized protein (111 aa).

A run of 2 helical transmembrane segments spans residues 45–65 (AFLIPVKYTAATVLLALLLVI) and 91–111 (LPAGIGLAVLTKVLKHLILHI).

It is found in the cell membrane. This is an uncharacterized protein from Methanothermobacter thermautotrophicus (strain ATCC 29096 / DSM 1053 / JCM 10044 / NBRC 100330 / Delta H) (Methanobacterium thermoautotrophicum).